We begin with the raw amino-acid sequence, 270 residues long: Bacterial microcompartment shell protein PduB (270 aa).

The tract at residues 6–18 (LVEQIMAQVIARV) is probable helix that binds cargo to the BMC shell. 2 BMC circularly permuted domains span residues 47–152 (EFVG…DRTF) and 154–258 (DVYG…LATL).

This sequence belongs to the EutL/PduB family. Homotrimerizes to form a pseudohexamer with a central pore. The trimers pack into an array. In purified BMCs seen as a 28.0 kDa and 25.0 kDa form, both of which have been N-terminally sequenced and whose N-fMet is removed; the smaller form is called PduB'.

It is found in the bacterial microcompartment. The protein operates within polyol metabolism; 1,2-propanediol degradation. Its function is as follows. The two proteins produced are among the major shell proteins of the bacterial microcompartment (BMC) dedicated to 1,2-propanediol (1,2-PD) degradation. Required for structural integrity of BMCs and to mitigate propionaldehyde toxicity. The N-terminal 13 residues are important for correct assembly of the BMC shell. The isolated BMC shell component protein ratio for J:A:B':B:K:T:U is approximately 15:10:7:6:1:1:2. The N-terminus of the long form (PduB) is required for correct formation of BMCs, deletions in the first 37 residues have substantially reduced levels of the major lumen enzymes. May play a major role in binding the enzyme contents to the shell. The 1,2-PD-specific bacterial microcompartment (BMC) concentrates low levels of 1,2-PD catabolic enzymes, concentrates volatile reaction intermediates thus enhancing pathway flux and keeps the level of toxic, mutagenic propionaldehyde low. In Salmonella typhimurium (strain LT2 / SGSC1412 / ATCC 700720), this protein is Bacterial microcompartment shell protein PduB.